The sequence spans 165 residues: Endoribonuclease YbeY (165 aa).

Residues His131, His135, and His141 each coordinate Zn(2+).

It belongs to the endoribonuclease YbeY family. The cofactor is Zn(2+).

It is found in the cytoplasm. Single strand-specific metallo-endoribonuclease involved in late-stage 70S ribosome quality control and in maturation of the 3' terminus of the 16S rRNA. The sequence is that of Endoribonuclease YbeY from Lachnoclostridium phytofermentans (strain ATCC 700394 / DSM 18823 / ISDg) (Clostridium phytofermentans).